The following is a 330-amino-acid chain: Aquaporin Lacbi1:307192 (330 aa).

At 1-40 (MSATPIIHLRDVKKRTGVLNAWERVRNKPQVHWAMECFAE) the chain is on the cytoplasmic side. The helical transmembrane segment at 41–61 (ALGVFFYVYFGLGSTAAWVIG) threads the bilayer. At 62–71 (NILKQSGLSS) the chain is on the extracellular side. The chain crosses the membrane as a helical span at residues 72-92 (VFQIGFAYAFGILFAIGVCAA). The Cytoplasmic portion of the chain corresponds to 93-124 (TSGGHFNPCVTIAFTIFRGFPPLKAVRYIVAQ). The NPA 1 motif lies at 99–101 (NPC). The helical transmembrane segment at 125-145 (ILGAYIASALVYNQWKVLIVE) threads the bilayer. Over 146 to 157 (SELLLKQAGVYE) the chain is Extracellular. Residues 158 to 178 (TTMFTPNGPAGIFALYLLPGA) traverse the membrane as a helical segment. Over 179 to 183 (QTLPR) the chain is Cytoplasmic. A helical transmembrane segment spans residues 184 to 204 (AFLNEFVNCFVLALVIWAALD). Over 205-207 (PTS) the chain is Extracellular. A helical transmembrane segment spans residues 208-228 (FMIPPVMAPFIIAAAYAGSIW). Topologically, residues 229 to 264 (GYAVPAISLNSARDIGCRLFALTIWGKSAAGGSYSA) are cytoplasmic. Positions 238 to 240 (NSA) match the NPA 2 motif. A helical transmembrane segment spans residues 265-285 (ITALVNIPATLLAAVVYELFL). Topologically, residues 286–330 (VDSDRVVAGSHLEFMNVAANHRRHRHQAEDDNHGDADDSSQEKPV) are extracellular. Residues 308–330 (RHRHQAEDDNHGDADDSSQEKPV) are disordered. Basic and acidic residues predominate over residues 312–330 (QAEDDNHGDADDSSQEKPV).

The protein belongs to the MIP/aquaporin (TC 1.A.8) family.

Its subcellular location is the membrane. In terms of biological role, water channel-like protein that does not show transport of water nor ammonium across membranes. In Laccaria bicolor (strain S238N-H82 / ATCC MYA-4686) (Bicoloured deceiver), this protein is Aquaporin Lacbi1:307192.